The chain runs to 310 residues: Putative type II methyltransferase M.MJ0563P (310 aa).

The SAM-dependent MTase C5-type domain occupies 1 to 310; sequence MNVIDLFSGC…AIAKEIKKQL (310 aa). Cys77 is an active-site residue.

This sequence belongs to the class I-like SAM-binding methyltransferase superfamily. C5-methyltransferase family.

The enzyme catalyses a 2'-deoxycytidine in DNA + S-adenosyl-L-methionine = a 5-methyl-2'-deoxycytidine in DNA + S-adenosyl-L-homocysteine + H(+). A putative methylase that may protect DNA from cleavage by an unknown endonuclease. This Methanocaldococcus jannaschii (strain ATCC 43067 / DSM 2661 / JAL-1 / JCM 10045 / NBRC 100440) (Methanococcus jannaschii) protein is Putative type II methyltransferase M.MJ0563P.